The primary structure comprises 259 residues: Imidazole glycerol phosphate synthase subunit HisF (259 aa).

Catalysis depends on residues Asp-11 and Asp-130.

It belongs to the HisA/HisF family. In terms of assembly, heterodimer of HisH and HisF.

The protein resides in the cytoplasm. It carries out the reaction 5-[(5-phospho-1-deoxy-D-ribulos-1-ylimino)methylamino]-1-(5-phospho-beta-D-ribosyl)imidazole-4-carboxamide + L-glutamine = D-erythro-1-(imidazol-4-yl)glycerol 3-phosphate + 5-amino-1-(5-phospho-beta-D-ribosyl)imidazole-4-carboxamide + L-glutamate + H(+). It participates in amino-acid biosynthesis; L-histidine biosynthesis; L-histidine from 5-phospho-alpha-D-ribose 1-diphosphate: step 5/9. Its function is as follows. IGPS catalyzes the conversion of PRFAR and glutamine to IGP, AICAR and glutamate. The HisF subunit catalyzes the cyclization activity that produces IGP and AICAR from PRFAR using the ammonia provided by the HisH subunit. This chain is Imidazole glycerol phosphate synthase subunit HisF, found in Desulfosudis oleivorans (strain DSM 6200 / JCM 39069 / Hxd3) (Desulfococcus oleovorans).